The chain runs to 712 residues: Polyribonucleotide nucleotidyltransferase (712 aa).

The Mg(2+) site is built by Asp-493 and Asp-499. A KH domain is found at 560-619 (PRLLTFKVDPEDIGKIIGPGGKMVRSITEATGAKVDISDDGTITVSSSVGGQAEAARAMI). In terms of domain architecture, S1 motif spans 629-697 (GQVYLGKVTR…HKGRVNLTRL (69 aa)).

This sequence belongs to the polyribonucleotide nucleotidyltransferase family. It depends on Mg(2+) as a cofactor.

It localises to the cytoplasm. The catalysed reaction is RNA(n+1) + phosphate = RNA(n) + a ribonucleoside 5'-diphosphate. In terms of biological role, involved in mRNA degradation. Catalyzes the phosphorolysis of single-stranded polyribonucleotides processively in the 3'- to 5'-direction. The sequence is that of Polyribonucleotide nucleotidyltransferase from Synechococcus sp. (strain JA-3-3Ab) (Cyanobacteria bacterium Yellowstone A-Prime).